A 476-amino-acid polypeptide reads, in one-letter code: Glycogen synthase (476 aa).

Lys-15 is an ADP-alpha-D-glucose binding site.

It belongs to the glycosyltransferase 1 family. Bacterial/plant glycogen synthase subfamily.

It catalyses the reaction [(1-&gt;4)-alpha-D-glucosyl](n) + ADP-alpha-D-glucose = [(1-&gt;4)-alpha-D-glucosyl](n+1) + ADP + H(+). It participates in glycan biosynthesis; glycogen biosynthesis. Its function is as follows. Synthesizes alpha-1,4-glucan chains using ADP-glucose. The polypeptide is Glycogen synthase (Halalkalibacterium halodurans (strain ATCC BAA-125 / DSM 18197 / FERM 7344 / JCM 9153 / C-125) (Bacillus halodurans)).